Here is a 1196-residue protein sequence, read N- to C-terminus: NACHT, LRR and PYD domains-containing protein 1b allele 5 (1196 aa).

A disordered region spans residues 1–22 (MEESPPKQKSNTKVTQHEGQQD). The 310-residue stretch at 126–435 (QLVIIEGAAG…EFFAAISCIL (310 aa)) folds into the NACHT domain. An ATP-binding site is contributed by 132-139 (GAAGIGKS). LRR repeat units lie at residues 627–647 (NLEG…QSLC) and 684–704 (SLTE…RMLC). The tract at residues 789-922 (FWGPTGPVAT…GYTVLKNPSF (134 aa)) is ZU5. Residues 789 to 1072 (FWGPTGPVAT…KFDHLCDQEF (284 aa)) enclose the FIIND domain. Residues 923 to 1072 (SPMGVVLRII…KFDHLCDQEF (150 aa)) form a UPA region. Residues 1106–1189 (HFMDQHREQL…HLVMDLFEKS (84 aa)) form the CARD domain.

The protein belongs to the NLRP family. Interacts with DPP9; leading to inhibit activation of the inflammasome. DPP9 acts via formation of a ternary complex, composed of a DPP9 homodimer, one full-length Nlrp1b protein, and one cleaved C-terminus of Nlrp1b (NACHT, LRR and PYD domains-containing protein 1b, C-terminus). Interacts with DPP8; leading to inhibit activation of the inflammasome, probably via formation of a ternary complex with DPP8. Interacts (via LRR repeats) with BCL2 and BCL2L1 (via the loop between motifs BH4 and BH3). Interacts with NOD2; this interaction may increase IL1B release. Interacts with EIF2AK2/PKR; this interaction requires EIF2AK2 activity, is accompanied by EIF2AK2 autophosphorylation and promotes inflammasome assembly in response to B.anthracis lethal toxin. Interacts with MEFV; this interaction targets Nlrp1b to degradation by autophagy, hence preventing excessive IL1B- and IL18-mediated inflammation. In terms of assembly, interacts with the C-terminal part of Nlrp1b (NACHT, LRR and PYD domains-containing protein 1b, C-terminus) in absence of pathogens and other damage-associated signals. As to quaternary structure, interacts with the N-terminal part of Nlrp1b (NACHT, LRR and PYD domains-containing protein 1b, N-terminus) in absence of pathogens and other damage-associated signals. Homomultimer; forms the Nlrp1b inflammasome polymeric complex, a filament composed of homopolymers of this form in response to pathogens and other damage-associated signals. The Nlrp1b inflammasome polymeric complex directly recruits pro-caspase-1 (proCASP1) independently of PYCARD/ASC. Interacts (via CARD domain) with CASP1 (via CARD domain); leading to CASP1 activation. Autocatalytically cleaved. Autocatalytic cleavage in FIIND region occurs constitutively, prior to activation signals, and is required for inflammasome activity (IL1B release), possibly by facilitating CASP1 binding. Both N- and C-terminal parts remain associated non-covalently. In terms of processing, ubiquitinated by the N-end rule pathway in response to pathogens and other damage-associated signals, leading to its degradation by the proteasome and subsequent release of the cleaved C-terminal part of the protein (NACHT, LRR and PYD domains-containing protein 1b, C-terminus), which polymerizes and forms the Nlrp1b inflammasome. Post-translationally, (Microbial infection) Cleavage by B.anthracis lethal toxin (LT) endopeptidase promotes ubiquitination and degradation of the N-terminal part, releasing the cleaved C-terminal part of the protein (NACHT, LRR and PYD domains-containing protein 1b, C-terminus), which polymerizes and forms the Nlrp1b inflammasome. In terms of tissue distribution, expressed in macrophages.

It is found in the cytoplasm. Its subcellular location is the cytosol. The protein resides in the inflammasome. Its activity is regulated as follows. Activated by cleavage by B.anthracis lethal toxin (LT) endopeptidase. Cleavage by LT promotes ubiquitination and degradation of the N-terminal part, releasing the cleaved C-terminal part of the protein (NACHT, LRR and PYD domains-containing protein 1b, C-terminus), which polymerizes and forms the Nlrp1b inflammasome. Nlrp1b inflammasome is inhibited by DPP8 and DPP9, which sequester the C-terminal fragment of Nlrp1b (NACHT, LRR and PYD domains-containing protein 1b, C-terminus) in a ternary complex, thereby preventing Nlrp1b oligomerization and activation. Nlrp1b inflammasome is activated by Val-boroPro (Talabostat, PT-100), an inhibitor of dipeptidyl peptidases DPP8 and DPP9. Val-boroPro relieves inhibition of DPP8 and/or DPP9 by promoting disruption of the ternary complex, releasing its C-terminal part from autoinhibition. Activated by metabolic inhibitors, such as 2-deoxy-D-glucose and sodium azide. Not activated by muramyl dipeptide, nor by full-length bacterial peptidoglycan. In terms of biological role, acts as the sensor component of the Nlrp1b inflammasome, which mediates inflammasome activation in response to various pathogen-associated signals, leading to subsequent pyroptosis. Inflammasomes are supramolecular complexes that assemble in the cytosol in response to pathogens and other damage-associated signals and play critical roles in innate immunity and inflammation. Acts as a recognition receptor (PRR): recognizes specific pathogens and other damage-associated signals, such as B.anthracis lethal toxin (LT) or Val-boroPro inhibitor, and mediates the formation of the inflammasome polymeric complex. In response to pathogen-associated signals, the N-terminal part of Nlrp1b is degraded by the proteasome, releasing the cleaved C-terminal part of the protein (NACHT, LRR and PYD domains-containing protein 1b, C-terminus), which polymerizes to initiate the formation of the inflammasome complex: the inflammasome directly recruits pro-caspase-1 (proCASP1) independently of PYCARD/ASC and promotes caspase-1 (CASP1) activation, which subsequently cleaves and activates inflammatory cytokines IL1B and IL18 and gasdermin-D (GSDMD), leading to pyroptosis. In the absence of GSDMD expression, the Nlrp1b inflammasome is able to recruit and activate CASP8, leading to activation of gasdermin-E (GSDME). Activation of Nlrp1b inflammasome is also required for HMGB1 secretion; the active cytokines and HMGB1 stimulate inflammatory responses. Primary mediator of macrophage susceptibility to B.anthracis LT: in response to B.anthracis infection, macrophages and dendritic cells release IL1B and undergo pyroptosis. This early inflammatory response to the toxin increases resistance to infection by B.anthracis spores. Its function is as follows. Constitutes the precursor of the Nlrp1b inflammasome, which mediates autoproteolytic processing within the FIIND domain to generate the N-terminal and C-terminal parts, which are associated non-covalently in absence of pathogens and other damage-associated signals. Functionally, regulatory part that prevents formation of the Nlrp1b inflammasome: in absence of pathogens and other damage-associated signals, interacts with the C-terminal part of Nlrp1b (NACHT, LRR and PYD domains-containing protein 1b, C-terminus), preventing activation of the Nlrp1b inflammasome. In response to pathogen-associated signals, this part is ubiquitinated by the N-end rule pathway and degraded by the proteasome, releasing the cleaved C-terminal part of the protein, which polymerizes and forms the Nlrp1b inflammasome. Constitutes the active part of the Nlrp1b inflammasome. In absence of pathogens and other damage-associated signals, interacts with the N-terminal part of Nlrp1b (NACHT, LRR and PYD domains-containing protein 1b, N-terminus), preventing activation of the Nlrp1b inflammasome. In response to pathogen-associated signals, the N-terminal part of Nlrp1b is degraded by the proteasome, releasing this form, which polymerizes to form the Nlrp1b inflammasome complex: the Nlrp1b inflammasome complex then directly recruits pro-caspase-1 (proCASP1) and promotes caspase-1 (CASP1) activation, leading to gasdermin-D (GSDMD) cleavage and subsequent pyroptosis. The sequence is that of NACHT, LRR and PYD domains-containing protein 1b allele 5 (Nlrp1b) from Mus musculus (Mouse).